A 277-amino-acid chain; its full sequence is tRNA U34 carboxymethyltransferase (277 aa).

Carboxy-S-adenosyl-L-methionine-binding positions include lysine 46, tryptophan 60, lysine 65, glycine 84, 106-108 (DPS), 133-134 (VE), tyrosine 153, and arginine 268.

The protein belongs to the class I-like SAM-binding methyltransferase superfamily. CmoB family. As to quaternary structure, homotetramer.

It catalyses the reaction carboxy-S-adenosyl-L-methionine + 5-hydroxyuridine(34) in tRNA = 5-carboxymethoxyuridine(34) in tRNA + S-adenosyl-L-homocysteine + H(+). Catalyzes carboxymethyl transfer from carboxy-S-adenosyl-L-methionine (Cx-SAM) to 5-hydroxyuridine (ho5U) to form 5-carboxymethoxyuridine (cmo5U) at position 34 in tRNAs. In Wolinella succinogenes (strain ATCC 29543 / DSM 1740 / CCUG 13145 / JCM 31913 / LMG 7466 / NCTC 11488 / FDC 602W) (Vibrio succinogenes), this protein is tRNA U34 carboxymethyltransferase.